The primary structure comprises 37 residues: Potassium channel toxin alpha-KTx 1.3 (37 aa).

Gln-1 carries the post-translational modification Pyrrolidone carboxylic acid. 3 cysteine pairs are disulfide-bonded: Cys-7/Cys-28, Cys-13/Cys-33, and Cys-17/Cys-35. Positions 26 to 33 (GKCMGKKC) are interaction with Ca(2+)-activated K(+) channels.

This sequence belongs to the short scorpion toxin superfamily. Potassium channel inhibitor family. Alpha-KTx 01 subfamily. As to expression, expressed by the venom gland.

It is found in the secreted. Functionally, blocks selectively the high conductance calcium-activated (maxi-K) potassium channels (KCa1.1/KCNMA1). This is Potassium channel toxin alpha-KTx 1.3 from Hottentotta tamulus (Eastern Indian scorpion).